The following is a 335-amino-acid chain: Probable cytosolic iron-sulfur protein assembly protein Ciao1 (335 aa).

WD repeat units lie at residues 12–51 (GHKGRIWGVAWHPKGNVFASCGEDKAIRIWSLTGNTWGTK), 57–96 (GHKRTIREIRWSPCGQYLASASFDATTAIWSKSSGEFECN), 101–140 (GHENEVKSVSWSRSGGLLATCSRDKSVWIWEVAGDDEFEC), 146–185 (PHTQDVKRVVWHPTKDVLASASYDNTIKMFAEEPIDNDWD), 192–231 (SHTSTVWGIDFDADGERLVSCSDDTTIKIWRAYHPGNTAG), 250–289 (QHSRAIYDVSWCKLTGLIATACGDDGIRIFKETSDSKPDE), and 301–335 (AHDQDVNSVQWNPVVAGQLISCSDDGTIKIWKVSE).

Belongs to the WD repeat CIA1 family.

In terms of biological role, essential component of the cytosolic iron-sulfur (Fe/S) protein assembly machinery. Required for the maturation of extramitochondrial Fe/S proteins. The polypeptide is Probable cytosolic iron-sulfur protein assembly protein Ciao1 (Drosophila sechellia (Fruit fly)).